A 265-amino-acid chain; its full sequence is Mlc titration factor A (265 aa).

The Zn(2+) site is built by histidine 111, histidine 148, histidine 152, and glutamate 211.

The protein belongs to the MtfA family. As to quaternary structure, interacts with Mlc. Zn(2+) is required as a cofactor.

Its subcellular location is the cytoplasm. Involved in the modulation of the activity of the glucose-phosphotransferase system (glucose-PTS). Interacts with the transcriptional repressor Mlc, preventing its interaction with DNA and leading to the modulation of expression of genes regulated by Mlc, including ptsG, which encodes the PTS system glucose-specific EIICB component. In terms of biological role, shows zinc-dependent metallopeptidase activity. The protein is Mlc titration factor A of Escherichia coli O139:H28 (strain E24377A / ETEC).